Consider the following 426-residue polypeptide: Serine--tRNA ligase (426 aa).

227-229 (TSE) serves as a coordination point for L-serine. ATP-binding positions include 258 to 260 (RKE) and Val274. Glu281 is a binding site for L-serine. 345–348 (ELTS) is an ATP binding site. Thr380 is an L-serine binding site.

It belongs to the class-II aminoacyl-tRNA synthetase family. Type-1 seryl-tRNA synthetase subfamily. As to quaternary structure, homodimer. The tRNA molecule binds across the dimer.

The protein localises to the cytoplasm. The enzyme catalyses tRNA(Ser) + L-serine + ATP = L-seryl-tRNA(Ser) + AMP + diphosphate + H(+). It carries out the reaction tRNA(Sec) + L-serine + ATP = L-seryl-tRNA(Sec) + AMP + diphosphate + H(+). The protein operates within aminoacyl-tRNA biosynthesis; selenocysteinyl-tRNA(Sec) biosynthesis; L-seryl-tRNA(Sec) from L-serine and tRNA(Sec): step 1/1. Its function is as follows. Catalyzes the attachment of serine to tRNA(Ser). Is also able to aminoacylate tRNA(Sec) with serine, to form the misacylated tRNA L-seryl-tRNA(Sec), which will be further converted into selenocysteinyl-tRNA(Sec). The polypeptide is Serine--tRNA ligase (Clavibacter sepedonicus (Clavibacter michiganensis subsp. sepedonicus)).